The following is a 360-amino-acid chain: Probable dual-specificity RNA methyltransferase RlmN (360 aa).

Glu91 acts as the Proton acceptor in catalysis. In terms of domain architecture, Radical SAM core spans 97–335 (QHYGQSVCVT…CVVRQEHGTD (239 aa)). Cys104 and Cys340 are disulfide-bonded. [4Fe-4S] cluster-binding residues include Cys111, Cys115, and Cys118. Residues 163–164 (GE), Ser195, 218–220 (SLH), and Asn296 each bind S-adenosyl-L-methionine. The active-site S-methylcysteine intermediate is Cys340.

It belongs to the radical SAM superfamily. RlmN family. [4Fe-4S] cluster is required as a cofactor.

Its subcellular location is the cytoplasm. It catalyses the reaction adenosine(2503) in 23S rRNA + 2 reduced [2Fe-2S]-[ferredoxin] + 2 S-adenosyl-L-methionine = 2-methyladenosine(2503) in 23S rRNA + 5'-deoxyadenosine + L-methionine + 2 oxidized [2Fe-2S]-[ferredoxin] + S-adenosyl-L-homocysteine. The enzyme catalyses adenosine(37) in tRNA + 2 reduced [2Fe-2S]-[ferredoxin] + 2 S-adenosyl-L-methionine = 2-methyladenosine(37) in tRNA + 5'-deoxyadenosine + L-methionine + 2 oxidized [2Fe-2S]-[ferredoxin] + S-adenosyl-L-homocysteine. In terms of biological role, specifically methylates position 2 of adenine 2503 in 23S rRNA and position 2 of adenine 37 in tRNAs. This is Probable dual-specificity RNA methyltransferase RlmN from Streptococcus equi subsp. zooepidemicus (strain MGCS10565).